Reading from the N-terminus, the 145-residue chain is Large ribosomal subunit protein bL19 (145 aa).

The protein belongs to the bacterial ribosomal protein bL19 family.

In terms of biological role, this protein is located at the 30S-50S ribosomal subunit interface and may play a role in the structure and function of the aminoacyl-tRNA binding site. The polypeptide is Large ribosomal subunit protein bL19 (Brucella abortus (strain S19)).